Consider the following 272-residue polypeptide: Shikimate dehydrogenase (NADP(+)) (272 aa).

Shikimate is bound by residues 14–16 (SKS) and T61. K65 acts as the Proton acceptor in catalysis. E77 contacts NADP(+). Shikimate-binding residues include N86 and D102. Residues 126–130 (GAGGA), 149–154 (NRTASR), and M213 each bind NADP(+). Y215 lines the shikimate pocket. NADP(+) is bound at residue G237.

This sequence belongs to the shikimate dehydrogenase family. In terms of assembly, homodimer.

It carries out the reaction shikimate + NADP(+) = 3-dehydroshikimate + NADPH + H(+). The protein operates within metabolic intermediate biosynthesis; chorismate biosynthesis; chorismate from D-erythrose 4-phosphate and phosphoenolpyruvate: step 4/7. Functionally, involved in the biosynthesis of the chorismate, which leads to the biosynthesis of aromatic amino acids. Catalyzes the reversible NADPH linked reduction of 3-dehydroshikimate (DHSA) to yield shikimate (SA). In Citrobacter koseri (strain ATCC BAA-895 / CDC 4225-83 / SGSC4696), this protein is Shikimate dehydrogenase (NADP(+)).